Consider the following 257-residue polypeptide: UPF0246 protein CPS_4102 (257 aa).

It belongs to the UPF0246 family.

In Colwellia psychrerythraea (strain 34H / ATCC BAA-681) (Vibrio psychroerythus), this protein is UPF0246 protein CPS_4102.